The sequence spans 61 residues: Bacteriocin mesentericin Y105 (61 aa).

Residues 1–24 (MTNMKSVEAYQQLDNQNLKKVVGG) form the signal peptide. A disulfide bridge links Cys-33 with Cys-38.

It belongs to the bacteriocin class IIA/YGNGV family.

The protein localises to the secreted. In terms of biological role, bacteriocin active against Listeria monocytogenes. This is Bacteriocin mesentericin Y105 (mesY) from Leuconostoc mesenteroides.